The following is a 514-amino-acid chain: L-carnitine/gamma-butyrobetaine antiporter (514 aa).

Topologically, residues 1–11 (MSKDNKKAGIE) are cytoplasmic. A helical transmembrane segment spans residues 12–30 (PKVFFPPLIIVGILCWLTV). Residues 31–42 (RDLDASNEVINA) are Periplasmic-facing. Residues 43 to 68 (VFSYVTNVWGWAFEWYMVIMFGGWFW) form a helical membrane-spanning segment. The Cytoplasmic segment spans residues 69-91 (LVFGRYAKKRLGDEKPEFSTASW). The helical transmembrane segment at 92-112 (IFMMFASCTSAAVLFWGSIEI) threads the bilayer. The Periplasmic portion of the chain corresponds to 113–131 (YYYISSPPFGMEGYSAPAK). A helical transmembrane segment spans residues 132–154 (EIGLAYSLFHWGPLPWATYSFLS). The Cytoplasmic segment spans residues 155–185 (VAFAYFFFVRKMEVIRPSSTLTPLVGEKHVN). The chain crosses the membrane as a helical span at residues 186–216 (GLFGTVVDNFYLVALILAMGTSLGLATPLVT). Over 217–230 (ECIQYLFGIPHTLQ) the chain is Periplasmic. The helical transmembrane segment at 231–249 (LDAIIISCWILLNAICVAF) threads the bilayer. The Cytoplasmic segment spans residues 250-251 (GL). A helical membrane pass occupies residues 252-277 (QKGVKIASDVRTYLSFLMLGWVFIVG). The Periplasmic portion of the chain corresponds to 278–311 (GASFIVNYFTDSVGTLLMYMPRMLFYTDPIGKGG). A helical membrane pass occupies residues 312–335 (FPQAWTVFYWAWWVIYAIQMSIFL). The Cytoplasmic portion of the chain corresponds to 336-347 (ARISKGRTVREL). A helical transmembrane segment spans residues 348–369 (CLGMVSGLTAGTWLIWTILGGN). At 370-404 (TLQLIDQNILNIPQLIDQYGVPRAIIETWAALPLS) the chain is on the periplasmic side. A helical membrane pass occupies residues 405-434 (TATMWGFFILCFIATVTLINACSYTLAMST). Residues 435-445 (CRSMKEGAEPP) lie on the Cytoplasmic side of the membrane. A helical transmembrane segment spans residues 446 to 464 (LLVRIGWSVLVGIIGIILL). The Periplasmic portion of the chain corresponds to 465 to 468 (ALGG). The helical transmembrane segment at 469–492 (LKPIQTAIIAGGCPLFFVNIMVTL) threads the bilayer. At 493-514 (SFIKDAKVHWKDCSPYTQKMTH) the chain is on the cytoplasmic side.

It belongs to the BCCT transporter (TC 2.A.15) family. CaiT subfamily. As to quaternary structure, homotrimer.

Its subcellular location is the cell inner membrane. It carries out the reaction 4-(trimethylamino)butanoate(in) + (R)-carnitine(out) = 4-(trimethylamino)butanoate(out) + (R)-carnitine(in). Its pathway is amine and polyamine metabolism; carnitine metabolism. In terms of biological role, catalyzes the exchange of L-carnitine for gamma-butyrobetaine. The chain is L-carnitine/gamma-butyrobetaine antiporter from Proteus mirabilis (strain HI4320).